A 754-amino-acid polypeptide reads, in one-letter code: 5-methyltetrahydropteroyltriglutamate--homocysteine methyltransferase (754 aa).

5-methyltetrahydropteroyltri-L-glutamate is bound by residues arginine 17–lysine 20 and lysine 110. Residues isoleucine 421–serine 423 and glutamate 474 each bind L-homocysteine. Residues isoleucine 421 to serine 423 and glutamate 474 contribute to the L-methionine site. 5-methyltetrahydropteroyltri-L-glutamate-binding positions include arginine 505–cysteine 506 and tryptophan 551. Position 589 (aspartate 589) interacts with L-homocysteine. Position 589 (aspartate 589) interacts with L-methionine. A 5-methyltetrahydropteroyltri-L-glutamate-binding site is contributed by glutamate 595. 3 residues coordinate Zn(2+): histidine 631, cysteine 633, and glutamate 655. The Proton donor role is filled by histidine 684. Zn(2+) is bound at residue cysteine 716.

It belongs to the vitamin-B12 independent methionine synthase family. Zn(2+) is required as a cofactor.

The enzyme catalyses 5-methyltetrahydropteroyltri-L-glutamate + L-homocysteine = tetrahydropteroyltri-L-glutamate + L-methionine. The protein operates within amino-acid biosynthesis; L-methionine biosynthesis via de novo pathway; L-methionine from L-homocysteine (MetE route): step 1/1. Functionally, catalyzes the transfer of a methyl group from 5-methyltetrahydrofolate to homocysteine resulting in methionine formation. This is 5-methyltetrahydropteroyltriglutamate--homocysteine methyltransferase from Synechococcus sp. (strain JA-2-3B'a(2-13)) (Cyanobacteria bacterium Yellowstone B-Prime).